The primary structure comprises 547 residues: Putative HMP/thiamine import ATP-binding protein YkoD (547 aa).

2 consecutive ABC transporter domains span residues Leu-8–Ile-250 and Leu-295–Leu-523. ATP contacts are provided by residues Gly-42–Ser-49 and Gly-327–Ser-334.

This sequence belongs to the ABC transporter superfamily. In terms of assembly, the complex is composed of two ATP-binding proteins (YkoD), two transmembrane proteins (YkoC and YkoE) and a solute-binding protein (YkoF).

It localises to the cell membrane. Functionally, part of the ABC transporter complex YkoCDEF that could transport hydroxymethylpyrimidine (HMP) and/or thiamine. Could also transport other HMP-containing products. Responsible for energy coupling to the transport system. The sequence is that of Putative HMP/thiamine import ATP-binding protein YkoD (ykoD) from Bacillus subtilis (strain 168).